Here is a 388-residue protein sequence, read N- to C-terminus: Envelope protein F13 homolog (388 aa).

Residue Gly-2 is the site of N-myristoyl glycine; by host attachment. Residues 310-337 (GDAINNTKLLVVDDEYVHVSNADIDGTH) form the PLD phosphodiesterase domain.

It localises to the virion membrane. It is found in the host endoplasmic reticulum membrane. Envelope protein associated with the inner side of the enveloped virion (EV) membrane. The sequence is that of Envelope protein F13 homolog (P43K) from Molluscum contagiosum virus subtype 2 (MOCV).